Here is a 271-residue protein sequence, read N- to C-terminus: Chymotrypsin BII (271 aa).

An N-terminal signal peptide occupies residues 1 to 15; that stretch reads MIGKLSLLLVCVAVA. The propeptide at 16–45 is activation peptide; the sequence is SGNPAAGKPWHWKSPKPLVDPRIHVNATPR. In terms of domain architecture, Peptidase S1 spans 46-268; that stretch reads IVGGVEATPH…YLDWIEQKTG (223 aa). Cysteines 71 and 87 form a disulfide. Catalysis depends on charge relay system residues His-86 and Asp-132. Disulfide bonds link Cys-196–Cys-209 and Cys-219–Cys-245. Catalysis depends on Ser-223, which acts as the Charge relay system.

Belongs to the peptidase S1 family.

The protein localises to the secreted. It is found in the extracellular space. It carries out the reaction Preferential cleavage: Tyr-|-Xaa, Trp-|-Xaa, Phe-|-Xaa, Leu-|-Xaa.. Serine protease with chymotryptic and collagenolytic activities. The polypeptide is Chymotrypsin BII (Penaeus vannamei (Whiteleg shrimp)).